A 298-amino-acid polypeptide reads, in one-letter code: MRDRTHELRQGDNISDDEDEVRVALVVHSGAARLSSPDDEFFQKVQTIRQTMAKLESKVRELEKQQVTILATPLPEESMKQGLQNLREEIKQLGREVRAQLKAIEPQKEEADENYNSVNTRMKKTQHGVLSQQFVELINKCNSMQSEYREKNVERIRRQLKITNAGMVSDEELEQMLDSGQSEVFVSNILKDTQVTRQALNEISARHSEIQQLERSIRELHEIFTFLATEVEMQGEMINRIEKNILSSADYVERGQEHVKIALENQKKARKKKVMIAICVSVTVLILAVIIGITITVG.

At 1-274 (MRDRTHELRQ…NQKKARKKKV (274 aa)) the chain is on the cytoplasmic side. A phosphoserine mark is found at S15, S29, S35, S36, S117, S208, and S248. Residues 38 to 163 (DDEFFQKVQT…ERIRRQLKIT (126 aa)) are a coiled coil. Residues 154-298 (ERIRRQLKIT…VIIGITITVG (145 aa)) form an interaction with CENPF region. One can recognise a t-SNARE coiled-coil homology domain in the interval 200-262 (LNEISARHSE…ERGQEHVKIA (63 aa)). A helical; Anchor for type IV membrane protein membrane pass occupies residues 275–295 (MIAICVSVTVLILAVIIGITI). The Extracellular portion of the chain corresponds to 296-298 (TVG).

The protein belongs to the syntaxin family. In terms of assembly, found in a complex with VAMP8 and SNAP23. Detected in a complex with SNAP23 and STXBP4. Interacts with SNAP23 and SNAPIN. Interacts with VAMP2. Interacts with LLGL1. Interacts (via C-terminus) with CENPF. Interacts with DOC2B. Interacts with STXBP3; excludes interaction with DOC2B and SNAP25. Interacts with STXBP4; excludes interaction with VAMP2. Component of the SNARE complex composed of STX4, SNAP23 and VAMP7 that interacts with SYT7 during lysosomal exocytosis. Interacts with STXBP6. Interacts with STXBP5L. In terms of tissue distribution, expressed in all tissues tested including adipose, brain, testis, intestine, liver, heart, spleen, skeletal muscle and kidney.

It localises to the cell membrane. The protein localises to the cell projection. It is found in the neuron projection. The protein resides in the stereocilium. In terms of biological role, plasma membrane t-SNARE that mediates docking of transport vesicles. Necessary for the translocation of SLC2A4 from intracellular vesicles to the plasma membrane. In neurons, recruited at neurite tips to membrane domains rich in the phospholipid 1-oleoyl-2-palmitoyl-PC (OPPC) which promotes neurite tip surface expression of the dopamine transporter SLC6A3/DAT by facilitating fusion of SLC6A3-containing transport vesicles with the plasma membrane. Together with STXB3 and VAMP2, may also play a role in docking/fusion of intracellular GLUT4-containing vesicles with the cell surface in adipocytes and in docking of synaptic vesicles at presynaptic active zones. Required for normal hearing. The sequence is that of Syntaxin-4 (Stx4) from Rattus norvegicus (Rat).